Consider the following 127-residue polypeptide: Putative 2Fe-2S ferredoxin (127 aa).

3 residues coordinate [2Fe-2S] cluster: C23, C54, and C58.

Belongs to the 2Fe2S Shethna-type ferredoxin family. [2Fe-2S] cluster is required as a cofactor.

Its function is as follows. Ferredoxins are iron-sulfur proteins that transfer electrons in a wide variety of metabolic reactions. The chain is Putative 2Fe-2S ferredoxin (cbiW) from Priestia megaterium (Bacillus megaterium).